A 38-amino-acid chain; its full sequence is Photosystem I reaction center subunit IX (38 aa).

The helical transmembrane segment at 4–24 threads the bilayer; that stretch reads FLTTAPVVAAIWFTATAGILI.

This sequence belongs to the PsaJ family.

The protein localises to the cellular thylakoid membrane. Functionally, may help in the organization of the PsaE and PsaF subunits. This is Photosystem I reaction center subunit IX from Synechococcus sp. (strain CC9902).